The primary structure comprises 185 residues: Biogenesis of lysosome-related organelles complex 1 subunit 5 (185 aa).

The tract at residues 1–25 (MSGGGTETPVACDAAQGGKKRDSLG) is disordered. Serine 2 carries the post-translational modification N-acetylserine.

The protein belongs to the BLOC1S5 family. Octamer composed of one copy each BLOC1S1, BLOC1S2, BLOC1S3, BLOC1S4, BLOC1S5, BLOC1S6, DTNBP1/BLOC1S7 and SNAPIN/BLOC1S8. Component of the biogenesis of lysosome-related organelles complex 1 (BLOC-1) composed of BLOC1S1, BLOC1S2, BLOC1S3, BLOC1S4, BLOC1S5, BLOC1S6, DTNBP1/BLOC1S7 and SNAPIN/BLOC1S8. The BLOC-1 complex associates with the AP-3 protein complex and membrane protein cargos. Interacts with BLOC1S4, BLOC1S6, DTNBP1/BLOC1S7 and PI4K2A. In terms of tissue distribution, detected in heart, brain, spleen, lung, kidney and testis.

Its function is as follows. Component of the BLOC-1 complex, a complex that is required for normal biogenesis of lysosome-related organelles (LRO), such as platelet dense granules and melanosomes. In concert with the AP-3 complex, the BLOC-1 complex is required to target membrane protein cargos into vesicles assembled at cell bodies for delivery into neurites and nerve terminals. The BLOC-1 complex, in association with SNARE proteins, is also proposed to be involved in neurite extension. Plays a role in intracellular vesicle trafficking. The polypeptide is Biogenesis of lysosome-related organelles complex 1 subunit 5 (Bloc1s5) (Mus musculus (Mouse)).